The following is a 188-amino-acid chain: UPF0301 protein ABO_0112 (188 aa).

It belongs to the UPF0301 (AlgH) family.

The sequence is that of UPF0301 protein ABO_0112 from Alcanivorax borkumensis (strain ATCC 700651 / DSM 11573 / NCIMB 13689 / SK2).